Consider the following 343-residue polypeptide: Cytoplasmic tRNA 2-thiolation protein 1 (343 aa).

It belongs to the TtcA family. CTU1/NCS6/ATPBD3 subfamily.

Its subcellular location is the cytoplasm. Its pathway is tRNA modification; 5-methoxycarbonylmethyl-2-thiouridine-tRNA biosynthesis. Plays a central role in 2-thiolation of mcm(5)S(2)U at tRNA wobble positions of tRNA(Lys), tRNA(Glu) and tRNA(Gln). Directly binds tRNAs and probably acts by catalyzing adenylation of tRNAs, an intermediate required for 2-thiolation. It is unclear whether it acts as a sulfurtransferase that transfers sulfur from thiocarboxylated URM1 onto the uridine of tRNAs at wobble position. The polypeptide is Cytoplasmic tRNA 2-thiolation protein 1 (Drosophila mojavensis (Fruit fly)).